A 445-amino-acid polypeptide reads, in one-letter code: MSFRSIVRDVRDGFGSLSRRGFEVRLVGHRRGRSHSAVHELRDGHAAAAAADVVQSSCWANLPPELLRDVIERLEASEAAWPSRKNVVACAAVCRTWRDMCREIVKNPEFCGKITFPVSLKQPGPRNGAIQCFIKRDKSTQTYNLYLCLSSAVLVESGKFLLSAKRYSRATCTEYTIFMSADNTSRSSNMYIGKLRSNLLGTKFVIYDTQPPCNTANVSQSGKTSRRFYSRKVSPKNPSSTYSIAQVSYELNVLGTRGPRRMNCVMHSIPASSLEAGGTVPCQPDSVLARSLDESFGSISFSKSSIMDRSIRFSSSRYSDISVGGPMVGGQALGDSDESKERPLILRNKAPRWHEQLQCWCLNFKGRVTVASVKNFQLVAATQPAAGAPTPSQPAPPPPPDHDKVILQFGKVAKDMFTMDYRYPLSAFQAFAICLSSFDTKLACE.

The F-box domain occupies 56–114; that stretch reads SSCWANLPPELLRDVIERLEASEAAWPSRKNVVACAAVCRTWRDMCREIVKNPEFCGKI.

The protein belongs to the TUB family. Ubiquitous.

The sequence is that of Tubby-like F-box protein 14 (TULP14) from Oryza sativa subsp. japonica (Rice).